The following is a 154-amino-acid chain: Lipoprotein signal peptidase (154 aa).

2 helical membrane passes run 52 to 72 (ILAGQMWFFYLITTAVIIGIV) and 85 to 105 (LGVALGLMLGGAIGNFIDRAV). Residues Asp111 and Asp129 contribute to the active site. A helical transmembrane segment spans residues 124 to 144 (IFNIADSSLCVGVMLLFIQML).

Belongs to the peptidase A8 family.

The protein localises to the cell membrane. It catalyses the reaction Release of signal peptides from bacterial membrane prolipoproteins. Hydrolyzes -Xaa-Yaa-Zaa-|-(S,diacylglyceryl)Cys-, in which Xaa is hydrophobic (preferably Leu), and Yaa (Ala or Ser) and Zaa (Gly or Ala) have small, neutral side chains.. It functions in the pathway protein modification; lipoprotein biosynthesis (signal peptide cleavage). In terms of biological role, this protein specifically catalyzes the removal of signal peptides from prolipoproteins. The chain is Lipoprotein signal peptidase from Bacillus subtilis (strain 168).